A 22-amino-acid chain; its full sequence is Mu-conotoxin SxIIIC (22 aa).

3 cysteine pairs are disulfide-bonded: Cys-3/Cys-15, Cys-4/Cys-21, and Cys-10/Cys-22. Cys-22 is subject to Cysteine amide.

It belongs to the conotoxin M superfamily. Expressed by the venom duct.

The protein resides in the secreted. Its function is as follows. Mu-conotoxins block voltage-gated sodium channels (Nav). This toxin potently inhibits hNav1.4/SCN4A (IC(50)=15.11 nM). It also displays lower activities on other human subtypes (Nav1.1/SCN1A; IC(50)=132 nM, Nav1.2/SCN2A; IC(50)=363.8, Nav1.3/SCN3A; IC(50)=89.4, Nav1.6/SCN3A; IC(50)=124.9, Nav1.7/SCN7A; IC(50)=152.2). At Nav1.7/SCN9A, it does not elicit change in channel voltage-dependence of fast inactivation or activation, suggesting it acts as a pore blocker. Interestingly, it blocks current inhibition in an irreversible manner (tested during 35 minutes). This is Mu-conotoxin SxIIIC from Conus striolatus (Cone snail).